The following is a 272-amino-acid chain: Cytochrome c1 (272 aa).

The signal sequence occupies residues 1–24 (MTTIVKRALVAAGMVLAIGGAAQA). Heme c contacts are provided by cysteine 61, cysteine 64, histidine 65, and methionine 200. Residues 244–261 (LGLKVLLFLGVLTAMLLA) form a helical membrane-spanning segment.

As to quaternary structure, the main subunits of complex b-c1 are: cytochrome b, cytochrome c1 and the Rieske protein. Post-translationally, binds 1 heme c group covalently per subunit.

The protein resides in the cell membrane. Functionally, component of the ubiquinol-cytochrome c reductase complex (complex III or cytochrome b-c1 complex), which is a respiratory chain that generates an electrochemical potential coupled to ATP synthesis. This chain is Cytochrome c1 (petC), found in Rhodospirillum rubrum.